Here is a 507-residue protein sequence, read N- to C-terminus: Arabinose import ATP-binding protein AraG (507 aa).

2 ABC transporter domains span residues 14–249 and 249–505; these read LRFN…MVGR and RDIQ…LPRT. Residue 46-53 participates in ATP binding; it reads GENGAGKS.

Belongs to the ABC transporter superfamily. Arabinose importer (TC 3.A.1.2.2) family. The complex is composed of two ATP-binding proteins (AraG), two transmembrane proteins (AraH) and a solute-binding protein (AraF).

Its subcellular location is the cell inner membrane. The catalysed reaction is L-arabinose(out) + ATP + H2O = L-arabinose(in) + ADP + phosphate + H(+). Part of the ABC transporter complex AraFGH involved in arabinose import. Responsible for energy coupling to the transport system. This is Arabinose import ATP-binding protein AraG from Pseudomonas savastanoi pv. phaseolicola (strain 1448A / Race 6) (Pseudomonas syringae pv. phaseolicola (strain 1448A / Race 6)).